Consider the following 309-residue polypeptide: NAD kinase (309 aa).

The Proton acceptor role is filled by Asp89. NAD(+) is bound by residues 89 to 90 (DG), 163 to 164 (NE), His174, Arg191, Asp193, and 204 to 209 (TAYALS).

This sequence belongs to the NAD kinase family. A divalent metal cation is required as a cofactor.

It is found in the cytoplasm. The catalysed reaction is NAD(+) + ATP = ADP + NADP(+) + H(+). Involved in the regulation of the intracellular balance of NAD and NADP, and is a key enzyme in the biosynthesis of NADP. Catalyzes specifically the phosphorylation on 2'-hydroxyl of the adenosine moiety of NAD to yield NADP. This Shewanella baltica (strain OS155 / ATCC BAA-1091) protein is NAD kinase.